The sequence spans 107 residues: Urease subunit beta (107 aa).

This sequence belongs to the urease beta subunit family. As to quaternary structure, heterotrimer of UreA (gamma), UreB (beta) and UreC (alpha) subunits. Three heterotrimers associate to form the active enzyme.

It is found in the cytoplasm. It carries out the reaction urea + 2 H2O + H(+) = hydrogencarbonate + 2 NH4(+). It participates in nitrogen metabolism; urea degradation; CO(2) and NH(3) from urea (urease route): step 1/1. The chain is Urease subunit beta from Janthinobacterium sp. (strain Marseille) (Minibacterium massiliensis).